Consider the following 909-residue polypeptide: Probable dipeptidyl-aminopeptidase B (909 aa).

Residues 1 to 63 are disordered; the sequence is MRVGSRINDE…HNHNGRAQGN (63 aa). Topologically, residues 1 to 94 are cytoplasmic; sequence MRVGSRINDE…NGKSNQRRTL (94 aa). Residues 27–38 show a composition bias toward low complexity; it reads DSSSTASISLTL. A helical; Signal-anchor for type II membrane protein membrane pass occupies residues 95-115; that stretch reads IVFWLLVALCVGGWAVAFLFF. Residues 116–909 are Vacuolar-facing; it reads VTSPGNKTST…YSNFLPIRSF (794 aa). Residue N121 is glycosylated (N-linked (GlcNAc...) asparagine). A compositionally biased stretch (polar residues) spans 123–134; that stretch reads TSTSPHSGSNSP. The tract at residues 123-144 is disordered; sequence TSTSPHSGSNSPEGDVTKPGIP. Residues N207, N303, and N355 are each glycosylated (N-linked (GlcNAc...) asparagine). Catalysis depends on S760, which acts as the Charge relay system. 3 N-linked (GlcNAc...) asparagine glycosylation sites follow: N814, N819, and N822. Residues D837 and H870 each act as charge relay system in the active site. N888 carries N-linked (GlcNAc...) asparagine glycosylation.

It belongs to the peptidase S9B family.

The protein resides in the vacuole membrane. The catalysed reaction is Release of an N-terminal dipeptide, Xaa-Yaa-|-Zaa-, from a polypeptide, preferentially when Yaa is Pro, provided Zaa is neither Pro nor hydroxyproline.. Type IV dipeptidyl-peptidase which removes N-terminal dipeptides sequentially from polypeptides having unsubstituted N-termini provided that the penultimate residue is proline. The polypeptide is Probable dipeptidyl-aminopeptidase B (DAPB) (Arthroderma benhamiae (strain ATCC MYA-4681 / CBS 112371) (Trichophyton mentagrophytes)).